The primary structure comprises 154 residues: Large ribosomal subunit protein uL13 (154 aa).

It belongs to the universal ribosomal protein uL13 family. Part of the 50S ribosomal subunit.

In terms of biological role, this protein is one of the early assembly proteins of the 50S ribosomal subunit, although it is not seen to bind rRNA by itself. It is important during the early stages of 50S assembly. The protein is Large ribosomal subunit protein uL13 of Cereibacter sphaeroides (strain ATCC 17029 / ATH 2.4.9) (Rhodobacter sphaeroides).